Here is a 557-residue protein sequence, read N- to C-terminus: 2-succinyl-5-enolpyruvyl-6-hydroxy-3-cyclohexene-1-carboxylate synthase (557 aa).

It belongs to the TPP enzyme family. MenD subfamily. As to quaternary structure, homodimer. Mg(2+) is required as a cofactor. The cofactor is Mn(2+). Requires thiamine diphosphate as cofactor.

The catalysed reaction is isochorismate + 2-oxoglutarate + H(+) = 5-enolpyruvoyl-6-hydroxy-2-succinyl-cyclohex-3-ene-1-carboxylate + CO2. It functions in the pathway quinol/quinone metabolism; 1,4-dihydroxy-2-naphthoate biosynthesis; 1,4-dihydroxy-2-naphthoate from chorismate: step 2/7. The protein operates within quinol/quinone metabolism; menaquinone biosynthesis. Its function is as follows. Catalyzes the thiamine diphosphate-dependent decarboxylation of 2-oxoglutarate and the subsequent addition of the resulting succinic semialdehyde-thiamine pyrophosphate anion to isochorismate to yield 2-succinyl-5-enolpyruvyl-6-hydroxy-3-cyclohexene-1-carboxylate (SEPHCHC). The chain is 2-succinyl-5-enolpyruvyl-6-hydroxy-3-cyclohexene-1-carboxylate synthase from Staphylococcus aureus (strain bovine RF122 / ET3-1).